Reading from the N-terminus, the 1342-residue chain is Cytokinesis protein sepH (1342 aa).

The span at 1 to 10 (MVSRSSEGAE) shows a compositional bias: low complexity. Positions 1-47 (MVSRSSEGAEGPPPSAPKPPNTPAKSRLSRLGSSPSKREDKSRDDRM) are disordered. Over residues 11–22 (GPPPSAPKPPNT) the composition is skewed to pro residues. Over residues 36-47 (SKREDKSRDDRM) the composition is skewed to basic and acidic residues. Positions 61-308 (YQLGDCLGKG…ARKLLKHPWI (248 aa)) constitute a Protein kinase domain. ATP-binding positions include 67–75 (LGKGAFGSV) and Lys-90. Asp-180 functions as the Proton acceptor in the catalytic mechanism. Disordered stretches follow at residues 336–396 (NEAL…EEDN), 441–486 (IKSD…QLQE), and 552–591 (ADENVDPFESSPSKEAIRNRASAEDVMGQQPQLRKQISVK). Residues 369–379 (KDTLPSPVSRN) show a composition bias toward polar residues. A coiled-coil region spans residues 658 to 695 (FAQLEEGLDEMDLEANIARDKHARLRNQVEGLVSSLKT). Residues 1201–1342 (SEAYGMGKRK…QTQADADWTP (142 aa)) form a disordered region. Residues 1207–1217 (GKRKPMVRRRS) show a composition bias toward basic residues. Polar residues-rich tracts occupy residues 1218–1244 (TSATPPNLLANQSAPSTPQMNRTSQSK) and 1273–1290 (DGSTPSLTAGLNGSTGAS). Residues 1315–1324 (RPSSSLSRRQ) show a composition bias toward low complexity.

This sequence belongs to the protein kinase superfamily. Ser/Thr protein kinase family. CDC7 subfamily. Mg(2+) is required as a cofactor.

It carries out the reaction L-seryl-[protein] + ATP = O-phospho-L-seryl-[protein] + ADP + H(+). The catalysed reaction is L-threonyl-[protein] + ATP = O-phospho-L-threonyl-[protein] + ADP + H(+). Its function is as follows. Required for early events during cytokinesis including localization of cytoskeletal components to the cytokinetic ring. In Aspergillus terreus (strain NIH 2624 / FGSC A1156), this protein is Cytokinesis protein sepH.